Consider the following 793-residue polypeptide: Phenylalanine--tRNA ligase beta subunit (793 aa).

In terms of domain architecture, tRNA-binding spans 39-148; that stretch reads AAPFKGVKAA…EGDFPGVDLH (110 aa). The B5 domain occupies 401–476; that stretch reads PPQATIILRK…RLYGYDRLPS (76 aa). Residues Asp-454, Asp-460, Glu-463, and Glu-464 each contribute to the Mg(2+) site. One can recognise an FDX-ACB domain in the interval 699 to 792; sequence SKFPAIRRDI…LVTELGAIIR (94 aa).

It belongs to the phenylalanyl-tRNA synthetase beta subunit family. Type 1 subfamily. In terms of assembly, tetramer of two alpha and two beta subunits. The cofactor is Mg(2+).

Its subcellular location is the cytoplasm. It carries out the reaction tRNA(Phe) + L-phenylalanine + ATP = L-phenylalanyl-tRNA(Phe) + AMP + diphosphate + H(+). This Nitrosococcus oceani (strain ATCC 19707 / BCRC 17464 / JCM 30415 / NCIMB 11848 / C-107) protein is Phenylalanine--tRNA ligase beta subunit.